The following is a 405-amino-acid chain: Dynactin subunit 2 (405 aa).

Residues 1 to 24 (MADPKYANLPGIASNEPDVYETSD) are disordered. Coiled-coil stretches lie at residues 102–125 (QQKYQRLVNEIHELCQDVEKIQTS) and 379–405 (QQTMKENLLAVEENFSALDQRMKKLNK).

It belongs to the dynactin subunit 2 family. In terms of assembly, subunit of dynactin, a multiprotein complex part of a tripartite complex with dynein and a adapter, such as BICDL1, BICD2 or HOOK3. The dynactin complex is built around ACTR1A/ACTB filament and consists of an actin-related filament composed of a shoulder domain, a pointed end and a barbed end. Its length is defined by its flexible shoulder domain. The soulder is composed of 2 DCTN1 subunits, 4 DCTN2 and 2 DCTN3.

The protein localises to the cytoplasm. It localises to the cytoskeleton. Its subcellular location is the microtubule organizing center. The protein resides in the centrosome. It is found in the membrane. Part of the dynactin complex that activates the molecular motor dynein for ultra-processive transport along microtubules. In the dynactin soulder domain, binds the ACTR1A filament and acts as a molecular ruler to determine the length. Modulates cytoplasmic dynein binding to an organelle, and plays a role in prometaphase chromosome alignment and spindle organization during mitosis. Involved in anchoring microtubules to centrosomes. The chain is Dynactin subunit 2 (dctn2) from Danio rerio (Zebrafish).